Reading from the N-terminus, the 340-residue chain is L-lysine 2,3-aminomutase (340 aa).

One can recognise a Radical SAM core domain in the interval 106-321 (RKYNNRILLL…SMISGFLVPK (216 aa)). Residues Cys-120, Cys-124, and Cys-127 each contribute to the [4Fe-4S] cluster site. N6-(pyridoxal phosphate)lysine is present on Lys-332.

Belongs to the radical SAM superfamily. KamA family. [4Fe-4S] cluster is required as a cofactor. Pyridoxal 5'-phosphate serves as cofactor.

It carries out the reaction L-lysine = D-beta-lysine. With EpmA is involved in the beta-lysylation step of the post-translational modification of translation elongation factor P (EF-P) on 'Lys-34'. EpmB appears to act before EpmA. Displays lysine 2,3-aminomutase activity, producing (R)-beta-lysine from (S)-alpha-lysine (L-lysine). This chain is L-lysine 2,3-aminomutase (epmB), found in Buchnera aphidicola subsp. Baizongia pistaciae (strain Bp).